Here is a 937-residue protein sequence, read N- to C-terminus: Translation initiation factor IF-2 (937 aa).

Disordered regions lie at residues 157 to 230 (KEAQ…AARK) and 250 to 346 (IKAP…ESNF). Basic and acidic residues predominate over residues 173–205 (EAQKADAAKPVEAKADESAQEEKKRVAAEESKK). A compositionally biased stretch (low complexity) spans 252-265 (APEPAAPVAAKPAE). The segment covering 267 to 293 (TLHKPADKKAGEKKDEKKPAVTADKKS) has biased composition (basic and acidic residues). Over residues 295-304 (KSANVSSTWQ) the composition is skewed to polar residues. The tr-type G domain maps to 437–606 (PRAPVVTVMG…LLQAEVLELK (170 aa)). Residues 446–453 (GHVDHGKT) are G1. A GTP-binding site is contributed by 446–453 (GHVDHGKT). Residues 471–475 (GITQH) form a G2 region. Residues 492 to 495 (DTPG) form a G3 region. Residues 492-496 (DTPGH) and 546-549 (NKID) contribute to the GTP site. Residues 546–549 (NKID) form a G4 region. A G5 region spans residues 582–584 (SAK).

Belongs to the TRAFAC class translation factor GTPase superfamily. Classic translation factor GTPase family. IF-2 subfamily.

The protein localises to the cytoplasm. Functionally, one of the essential components for the initiation of protein synthesis. Protects formylmethionyl-tRNA from spontaneous hydrolysis and promotes its binding to the 30S ribosomal subunits. Also involved in the hydrolysis of GTP during the formation of the 70S ribosomal complex. This is Translation initiation factor IF-2 from Janthinobacterium sp. (strain Marseille) (Minibacterium massiliensis).